The following is a 67-amino-acid chain: ATP synthase F(0) complex subunit 8 (67 aa).

The helical transmembrane segment at 8–24 (TWFTVILSMIISLFMLL) threads the bilayer. Lysine 54 carries the N6-acetyllysine; alternate modification. The residue at position 54 (lysine 54) is an N6-succinyllysine; alternate. Lysine 57 is subject to N6-acetyllysine.

Belongs to the ATPase protein 8 family. As to quaternary structure, component of the ATP synthase complex composed at least of ATP5F1A/subunit alpha, ATP5F1B/subunit beta, ATP5MC1/subunit c (homooctomer), MT-ATP6/subunit a, MT-ATP8/subunit 8, ATP5ME/subunit e, ATP5MF/subunit f, ATP5MG/subunit g, ATP5MK/subunit k, ATP5MJ/subunit j, ATP5F1C/subunit gamma, ATP5F1D/subunit delta, ATP5F1E/subunit epsilon, ATP5PF/subunit F6, ATP5PB/subunit b, ATP5PD/subunit d, ATP5PO/subunit OSCP. ATP synthase complex consists of a soluble F(1) head domain (subunits alpha(3) and beta(3)) - the catalytic core - and a membrane F(0) domain - the membrane proton channel (subunits c, a, 8, e, f, g, k and j). These two domains are linked by a central stalk (subunits gamma, delta, and epsilon) rotating inside the F1 region and a stationary peripheral stalk (subunits F6, b, d, and OSCP). Interacts with PRICKLE3.

It localises to the mitochondrion membrane. Functionally, subunit 8, of the mitochondrial membrane ATP synthase complex (F(1)F(0) ATP synthase or Complex V) that produces ATP from ADP in the presence of a proton gradient across the membrane which is generated by electron transport complexes of the respiratory chain. ATP synthase complex consist of a soluble F(1) head domain - the catalytic core - and a membrane F(1) domain - the membrane proton channel. These two domains are linked by a central stalk rotating inside the F(1) region and a stationary peripheral stalk. During catalysis, ATP synthesis in the catalytic domain of F(1) is coupled via a rotary mechanism of the central stalk subunits to proton translocation. In vivo, can only synthesize ATP although its ATP hydrolase activity can be activated artificially in vitro. Part of the complex F(0) domain. The chain is ATP synthase F(0) complex subunit 8 from Cavia porcellus (Guinea pig).